The following is a 200-amino-acid chain: Pyridoxine/pyridoxamine 5'-phosphate oxidase (200 aa).

FMN is bound by residues 48 to 53, 63 to 64, Lys-70, and Gln-92; these read RMVLLK and YT. Residue Lys-53 participates in substrate binding. Substrate-binding residues include Tyr-110, Arg-114, and Ser-118. FMN-binding positions include 127–128 and Trp-171; that span reads QS. Residue 177–179 coordinates substrate; sequence RLH. Residue Arg-181 participates in FMN binding.

The protein belongs to the pyridoxamine 5'-phosphate oxidase family. As to quaternary structure, homodimer. The cofactor is FMN.

It catalyses the reaction pyridoxamine 5'-phosphate + O2 + H2O = pyridoxal 5'-phosphate + H2O2 + NH4(+). The catalysed reaction is pyridoxine 5'-phosphate + O2 = pyridoxal 5'-phosphate + H2O2. Its pathway is cofactor metabolism; pyridoxal 5'-phosphate salvage; pyridoxal 5'-phosphate from pyridoxamine 5'-phosphate: step 1/1. The protein operates within cofactor metabolism; pyridoxal 5'-phosphate salvage; pyridoxal 5'-phosphate from pyridoxine 5'-phosphate: step 1/1. In terms of biological role, catalyzes the oxidation of either pyridoxine 5'-phosphate (PNP) or pyridoxamine 5'-phosphate (PMP) into pyridoxal 5'-phosphate (PLP). This is Pyridoxine/pyridoxamine 5'-phosphate oxidase from Cereibacter sphaeroides (strain ATCC 17029 / ATH 2.4.9) (Rhodobacter sphaeroides).